A 281-amino-acid chain; its full sequence is NADPH-dependent 7-cyano-7-deazaguanine reductase (281 aa).

88–90 contributes to the substrate binding site; sequence IES. 90–91 serves as a coordination point for NADPH; it reads SK. The Thioimide intermediate role is filled by Cys189. Asp196 (proton donor) is an active-site residue. Substrate is bound at residue 228–229; the sequence is HE. Residue 257–258 coordinates NADPH; it reads RG.

It belongs to the GTP cyclohydrolase I family. QueF type 2 subfamily. As to quaternary structure, homodimer.

It localises to the cytoplasm. It carries out the reaction 7-aminomethyl-7-carbaguanine + 2 NADP(+) = 7-cyano-7-deazaguanine + 2 NADPH + 3 H(+). It participates in tRNA modification; tRNA-queuosine biosynthesis. Functionally, catalyzes the NADPH-dependent reduction of 7-cyano-7-deazaguanine (preQ0) to 7-aminomethyl-7-deazaguanine (preQ1). In Yersinia pseudotuberculosis serotype O:1b (strain IP 31758), this protein is NADPH-dependent 7-cyano-7-deazaguanine reductase.